A 239-amino-acid chain; its full sequence is Tungstate uptake system permease protein TupB (239 aa).

The ABC transmembrane type-1 domain occupies 37-233 (IKTTLLSSSI…LIAFCLNFIT (197 aa)). 5 consecutive transmembrane segments (helical) span residues 45-65 (SISI…LGFF), 76-96 (IVDT…YALI), 114-134 (LILG…SNLI), 168-188 (ISVV…AMIV), and 212-232 (FASG…LNFI).

The protein belongs to the binding-protein-dependent transport system permease family. As to quaternary structure, the complex is composed of two ATP-binding proteins (TupC), two transmembrane proteins (TupB) and a solute-binding protein (TupA).

It localises to the cell inner membrane. Functionally, part of an ABC transporter complex involved in ultra-high affinity tungstate uptake. Probably responsible for the translocation of the substrate across the membrane. In Campylobacter jejuni subsp. jejuni serotype O:2 (strain ATCC 700819 / NCTC 11168), this protein is Tungstate uptake system permease protein TupB.